Here is a 451-residue protein sequence, read N- to C-terminus: Chromosomal replication initiator protein DnaA (451 aa).

Residues 1-73 (MQDNLPQIWE…SNALKQTTSK (73 aa)) form a domain I, interacts with DnaA modulators region. A domain II region spans residues 73–113 (KNFEIRFIVPSEEKISKTEESQKKLEGSVNISVASDQFVSN). A domain III, AAA+ region region spans residues 114-330 (NLNPKYTFDT…GALIRIVAYS (217 aa)). Positions 158, 160, 161, and 162 each coordinate ATP. A domain IV, binds dsDNA region spans residues 331–451 (SLTNSEITVE…ERIAKEIKGD (121 aa)).

Belongs to the DnaA family. In terms of assembly, oligomerizes as a right-handed, spiral filament on DNA at oriC.

The protein localises to the cytoplasm. Plays an essential role in the initiation and regulation of chromosomal replication. ATP-DnaA binds to the origin of replication (oriC) to initiate formation of the DNA replication initiation complex once per cell cycle. Binds the DnaA box (a 9 base pair repeat at the origin) and separates the double-stranded (ds)DNA. Forms a right-handed helical filament on oriC DNA; dsDNA binds to the exterior of the filament while single-stranded (ss)DNA is stabiized in the filament's interior. The ATP-DnaA-oriC complex binds and stabilizes one strand of the AT-rich DNA unwinding element (DUE), permitting loading of DNA polymerase. After initiation quickly degrades to an ADP-DnaA complex that is not apt for DNA replication. Binds acidic phospholipids. This is Chromosomal replication initiator protein DnaA from Alkaliphilus oremlandii (strain OhILAs) (Clostridium oremlandii (strain OhILAs)).